A 62-amino-acid polypeptide reads, in one-letter code: Alpha-conotoxin-like Qc1.2 (62 aa).

The first 21 residues, 1-21, serve as a signal peptide directing secretion; sequence MGMRMMFTVFLLVALATTVAS. The propeptide occupies 22–48; it reads FTLDRASNGRNAAADDKPSDWIALAIK. Glutamine 49 carries the post-translational modification Pyrrolidone carboxylic acid. Cystine bridges form between cysteine 50/cysteine 56 and cysteine 51/cysteine 61.

The protein belongs to the conotoxin A superfamily. Expressed by the venom duct.

It is found in the secreted. Its function is as follows. Alpha-conotoxins bind to the nicotinic acetylcholine receptors (nAChR) and inhibit them. This synthetic peptide (10 uM) selectively, but weakly inhibits both rat neuronal alpha-3-beta-2/CHRNA3-CHRNB2 (63%) and alpha-3-beta-4/CHRNA3-CHRNB4 (37%) subtypes of nAChR. In Conus quercinus (Oak cone), this protein is Alpha-conotoxin-like Qc1.2.